A 255-amino-acid chain; its full sequence is Pyrroloquinoline-quinone synthase (255 aa).

Belongs to the PqqC family.

The enzyme catalyses 6-(2-amino-2-carboxyethyl)-7,8-dioxo-1,2,3,4,7,8-hexahydroquinoline-2,4-dicarboxylate + 3 O2 = pyrroloquinoline quinone + 2 H2O2 + 2 H2O + H(+). It participates in cofactor biosynthesis; pyrroloquinoline quinone biosynthesis. Its function is as follows. Ring cyclization and eight-electron oxidation of 3a-(2-amino-2-carboxyethyl)-4,5-dioxo-4,5,6,7,8,9-hexahydroquinoline-7,9-dicarboxylic-acid to PQQ. This chain is Pyrroloquinoline-quinone synthase, found in Cereibacter sphaeroides (strain KD131 / KCTC 12085) (Rhodobacter sphaeroides).